Here is a 497-residue protein sequence, read N- to C-terminus: Acetyltransferase FGR3 (497 aa).

Positions 221 and 224 each coordinate Ca(2+). Lysine 255 and aspartate 303 together coordinate CoA. Aspartate 386 is a binding site for Ca(2+). Threonine 396 contributes to the CoA binding site. Aspartate 462 contributes to the Ca(2+) binding site. The segment at 477-497 (DASEAKKANGTNGTNGVNGSS) is disordered. Residues 485-497 (NGTNGTNGVNGSS) are compositionally biased toward low complexity.

Belongs to the trichothecene 3-O-acetyltransferase family.

Its pathway is secondary metabolite biosynthesis. In terms of biological role, acetyltransferase; part of the gene cluster that mediates the biosynthesis of the tetraketides fugralins such as linear fugralin A and cyclic fugralin B, volatile compounds that play a role in the asexual reproductive cycle but are not involved in pathogenicity. One of the key features of fugralins is the presence of a double methyl group, which is only rarely encountered in fungal secondary metabolites. As the fugralins cluster does not contain an independent methyltransferase, the PKS FGR1 is probably responsible for adding two methyl groups to the same carbon atom. Fugralin B is similar to fugralin A except for a cyclization between the carboxylic acid C-8 and the alcohol on C-4 resulting in a six membered lactone ring, probably catalyzed by the cyclase FGR4. The exact role of the individual cluster genes remains unknown and further work is needed to unravel the biosynthetic pathway. This Gibberella zeae (strain ATCC MYA-4620 / CBS 123657 / FGSC 9075 / NRRL 31084 / PH-1) (Wheat head blight fungus) protein is Acetyltransferase FGR3.